We begin with the raw amino-acid sequence, 101 residues long: Iron-sulfur cluster assembly protein CyaY (101 aa).

It belongs to the frataxin family.

Involved in iron-sulfur (Fe-S) cluster assembly. May act as a regulator of Fe-S biogenesis. The sequence is that of Iron-sulfur cluster assembly protein CyaY from Haemophilus influenzae (strain PittEE).